Consider the following 222-residue polypeptide: MTKVLVTGFGPYGVTPDNPAQFTAEALDGRTIAGATVVSRIVPGAYFDSIAAAEQAIAEVDPQLVIMLGEYPGRAMLTVERLAQNINDCGRYGLADTAGKVLVGEPTDPDGPVAYHATVPVHEMVLAMRAAGIPADVSDAAGTFVCNHLMYGVLHHIATQNLPIRAGWVHLPCLPMVAALDRNLGVPSMSVETAVAGLVAGIEAAVQHSADTREPVPSRLQI.

Active-site residues include E80, C146, and H170.

It belongs to the peptidase C15 family. In terms of assembly, homotetramer.

The protein localises to the cytoplasm. It carries out the reaction Release of an N-terminal pyroglutamyl group from a polypeptide, the second amino acid generally not being Pro.. In terms of biological role, removes 5-oxoproline from various penultimate amino acid residues except L-proline. This chain is Pyrrolidone-carboxylate peptidase, found in Mycobacterium marinum (strain ATCC BAA-535 / M).